We begin with the raw amino-acid sequence, 201 residues long: FMN-dependent NADH:quinone oxidoreductase (201 aa).

FMN contacts are provided by residues Ser10, 16-18 (SQS), 96-99 (MYNF), and 140-143 (SRGG).

Belongs to the azoreductase type 1 family. As to quaternary structure, homodimer. FMN is required as a cofactor.

It catalyses the reaction 2 a quinone + NADH + H(+) = 2 a 1,4-benzosemiquinone + NAD(+). The enzyme catalyses N,N-dimethyl-1,4-phenylenediamine + anthranilate + 2 NAD(+) = 2-(4-dimethylaminophenyl)diazenylbenzoate + 2 NADH + 2 H(+). Functionally, quinone reductase that provides resistance to thiol-specific stress caused by electrophilic quinones. In terms of biological role, also exhibits azoreductase activity. Catalyzes the reductive cleavage of the azo bond in aromatic azo compounds to the corresponding amines. This Shigella boydii serotype 4 (strain Sb227) protein is FMN-dependent NADH:quinone oxidoreductase.